We begin with the raw amino-acid sequence, 59 residues long: Putative potassium channel toxin Ts22 (59 aa).

A signal peptide spans 1–22; the sequence is MKAFYGILIIFILISMIDLSQQ. Cystine bridges form between C29–C50, C35–C55, and C39–C57.

The protein belongs to the short scorpion toxin superfamily. Potassium channel inhibitor family. Alpha-KTx 04 subfamily. In terms of tissue distribution, expressed by the venom gland.

The protein resides in the secreted. Its function is as follows. Potently blocks voltage-gated potassium channels (Kv). This is Putative potassium channel toxin Ts22 from Tityus serrulatus (Brazilian scorpion).